A 433-amino-acid chain; its full sequence is GTPase Obg (433 aa).

Positions 2–160 (PTFVDQTKIE…RVLRLELKLL (159 aa)) constitute an Obg domain. The region spanning 161-334 (ADVGLVGFPS…LMNDTATLVE (174 aa)) is the OBG-type G domain. Residues 167–174 (GFPSVGKS), 192–196 (FTTLT), 214–217 (DLPG), 284–287 (SQMD), and 315–317 (SSV) each bind GTP. Residues Ser174 and Thr194 each coordinate Mg(2+). In terms of domain architecture, OCT spans 355–433 (YKAPQRNEFM…IGKFVFEFVQ (79 aa)).

It belongs to the TRAFAC class OBG-HflX-like GTPase superfamily. OBG GTPase family. As to quaternary structure, monomer. It depends on Mg(2+) as a cofactor.

The protein resides in the cytoplasm. Functionally, an essential GTPase which binds GTP, GDP and possibly (p)ppGpp with moderate affinity, with high nucleotide exchange rates and a fairly low GTP hydrolysis rate. Plays a role in control of the cell cycle, stress response, ribosome biogenesis and in those bacteria that undergo differentiation, in morphogenesis control. The sequence is that of GTPase Obg from Lactobacillus acidophilus (strain ATCC 700396 / NCK56 / N2 / NCFM).